A 145-amino-acid chain; its full sequence is uncharacterized protein (145 aa).

Residue Ser-67 is modified to Phosphoserine.

In terms of tissue distribution, expressed in retina and retinoblastoma.

This is an uncharacterized protein from Homo sapiens (Human).